A 643-amino-acid chain; its full sequence is Threonine--tRNA ligase (643 aa).

A TGS domain is found at 1–61; it reads MPIITLPDGS…EQDATLEIIT (61 aa). The segment at 243 to 534 is catalytic; sequence DHRKIGKALD…ITEEYAGFFP (292 aa). Residues Cys334, His385, and His511 each coordinate Zn(2+).

It belongs to the class-II aminoacyl-tRNA synthetase family. As to quaternary structure, homodimer. It depends on Zn(2+) as a cofactor.

It is found in the cytoplasm. It catalyses the reaction tRNA(Thr) + L-threonine + ATP = L-threonyl-tRNA(Thr) + AMP + diphosphate + H(+). In terms of biological role, catalyzes the attachment of threonine to tRNA(Thr) in a two-step reaction: L-threonine is first activated by ATP to form Thr-AMP and then transferred to the acceptor end of tRNA(Thr). Also edits incorrectly charged L-seryl-tRNA(Thr). The protein is Threonine--tRNA ligase of Haemophilus influenzae (strain PittEE).